The chain runs to 558 residues: MAKNRRDRNSWGGFSEKTYEWSSEEEEPVKKAGPVQVLIVKDDHSFELDETALNRILLSEAVRDKEVVAVSVAGAFRKGKSFLMDFMLRYMYNQESVDWVGDYNEPLTGFSWRGGSERETTGIQIWSEVFLINKPDGKKVAVLLMDTQGTFDSQSTLRDSATVFALSTMISSIQVYNLSQNVQEDDLQHLQLFTEYGRLAMEETFLKPFQSLIFLVRDWSFPYEFSYGADGGAKFLEKRLKVSGNQHEELQNVRKHIHSCFTNISCFLLPHPGLKVATNPNFDGKLKEIDDEFIKNLKILIPWLLSPESLDIKEINGNKITCRGLVEYFKAYIKIYQGEELPHPKSMLQATAEANNLAAVATAKDTYNKKMEEICGGDKPFLAPNDLQSKHLQLKEESVKLFRGVKKMGGEEFSRRYLQQLESEIDELYIQYIKHNDSKNIFHAARTPATLFVVIFITYVIAGVTGFIGLDIIASLCNMIMGLTLITLCTWAYIRYSGEYRELGAVIDQVAAALWDQGSTNEALYKLYSAAATHRHLYHQAFPTPKSESTEQSEKKKM.

The disordered stretch occupies residues 1–27; it reads MAKNRRDRNSWGGFSEKTYEWSSEEEE. Residues 1–34 form an N-terminal hypervariable region (HVR) region; it reads MAKNRRDRNSWGGFSEKTYEWSSEEEEPVKKAGP. Residues 1–449 lie on the Cytoplasmic side of the membrane; that stretch reads MAKNRRDRNS…NIFHAARTPA (449 aa). Ser10, Ser22, and Ser23 each carry phosphoserine. In terms of domain architecture, GB1/RHD3-type G spans 64–309; sequence DKEVVAVSVA…LIPWLLSPES (246 aa). GDP-binding residues include Arg77, Lys78, Gly79, Lys80, Ser81, Phe82, Gln148, Arg217, Asp218, Val276, and Asn279. Residues Arg77, Lys78, Gly79, Lys80, Ser81, and Phe82 each contribute to the GTP site. Residue Ser81 participates in Mg(2+) binding. Residues Arg217, Asp218, and Val276 each coordinate GTP. Residues 347–438 form a 3HB (three-helix bundle) domain region; the sequence is MLQATAEANN…YIQYIKHNDS (92 aa). Lys395 carries the N6-acetyllysine modification. Residues 412–439 adopt a coiled-coil conformation; sequence EFSRRYLQQLESEIDELYIQYIKHNDSK. Residues 439–447 are linker; that stretch reads KNIFHAART. The helical transmembrane segment at 450–470 threads the bilayer; the sequence is TLFVVIFITYVIAGVTGFIGL. Residue Asp471 is a topological domain, lumenal. A helical membrane pass occupies residues 472–492; it reads IIASLCNMIMGLTLITLCTWA. Residues 493–558 are Cytoplasmic-facing; it reads YIRYSGEYRE…STEQSEKKKM (66 aa). The tract at residues 521 to 558 is autoinhibitory domain; it reads NEALYKLYSAAATHRHLYHQAFPTPKSESTEQSEKKKM.

It belongs to the TRAFAC class dynamin-like GTPase superfamily. GB1/RHD3 GTPase family. GB1 subfamily. In terms of assembly, monomeric and homodimeric. The homodimer, transiently formed by two molecules on opposing membranes, is the active form mediating ER membrane fusion. Interacts with REEP1, REEP5, RTN3 and RTN4 (via the transmembrane region); these proteins are involved in endoplasmic reticulum tubular network organization. Interacts with ZFYVE27; both proteins are involved in endoplasmic reticulum tubular network organization. Interacts with ARL6IP1; both proteins are involved in endoplasmic reticulum tubular network organization. Interacts with SPAST; the interaction is direct, could recruit SPAST to Golgi membranes. Interacts (via N-terminal region) with MAP4K4 (via CNH regulatory domain). May interact with TMED2. Interacts with CPT1C. In terms of processing, phosphorylated. Phosphorylation, by different kinases, of the N-terminal hypervariable region (HVR) regulates the ATL1-mediated membrane tethering step.

It is found in the endoplasmic reticulum membrane. Its subcellular location is the golgi apparatus membrane. The protein resides in the cell projection. It localises to the axon. The enzyme catalyses GTP + H2O = GDP + phosphate + H(+). Its function is as follows. Atlastin-1 (ATL1) is a membrane-anchored GTPase that mediates the GTP-dependent fusion of endoplasmic reticulum (ER) membranes, maintaining the continuous ER network. It facilitates the formation of three-way junctions where ER tubules intersect. Two atlastin-1 on neighboring ER tubules bind GTP and form loose homodimers through the GB1/RHD3-type G domains and 3HB regions. Upon GTP hydrolysis, the 3HB regions tighten, pulling the membranes together to drive their fusion. After fusion, the homodimer disassembles upon release of inorganic phosphate (Pi). Subsequently, GDP dissociates, resetting the monomers to a conformation ready for a new fusion cycle. May also regulate more or less directly Golgi biogenesis. Indirectly regulates axonal development. The protein is Atlastin-1 of Macaca fascicularis (Crab-eating macaque).